A 520-amino-acid chain; its full sequence is Transactivator/viroplasmin protein (520 aa).

The segment at 486 to 520 is disordered; sequence VQDASADSGPKDGPPPTRSIVEKEDVPTTSSKQVD.

Belongs to the caulimoviridae viroplasmin family.

The protein localises to the host cytoplasm. In terms of biological role, enhances the ribosomal termination-reinitiation event leading to the translation of major open reading frames on the polycistronic viral RNAs. The protein is Transactivator/viroplasmin protein of Cauliflower mosaic virus (strain BBC) (CaMV).